Here is a 393-residue protein sequence, read N- to C-terminus: Chorismate synthase (393 aa).

2 residues coordinate NADP(+): R40 and R46. FMN is bound by residues 129–131 (RSS), 249–250 (QA), G301, 316–320 (KPIPT), and R342.

The protein belongs to the chorismate synthase family. As to quaternary structure, homotetramer. The cofactor is FMNH2.

The catalysed reaction is 5-O-(1-carboxyvinyl)-3-phosphoshikimate = chorismate + phosphate. The protein operates within metabolic intermediate biosynthesis; chorismate biosynthesis; chorismate from D-erythrose 4-phosphate and phosphoenolpyruvate: step 7/7. In terms of biological role, catalyzes the anti-1,4-elimination of the C-3 phosphate and the C-6 proR hydrogen from 5-enolpyruvylshikimate-3-phosphate (EPSP) to yield chorismate, which is the branch point compound that serves as the starting substrate for the three terminal pathways of aromatic amino acid biosynthesis. This reaction introduces a second double bond into the aromatic ring system. In Pelobacter propionicus (strain DSM 2379 / NBRC 103807 / OttBd1), this protein is Chorismate synthase.